A 757-amino-acid polypeptide reads, in one-letter code: Chloride channel protein C (757 aa).

At 1–96 (MGSSLNKPLS…LHLKKTFGKW (96 aa)) the chain is on the cytoplasmic side. 11 helical membrane passes run 97-117 (IICLFLGVIVGCIAYVIKMVV), 141-161 (FLTFLGINLLFVFLSCLMVIV), 196-216 (IVSLVLSFSSGLFVGPEGPMI), 253-273 (FISIGAATGLAAAFGAPIGGV), 292-312 (TFFTCVIAAFTTNFLLQGIGS), 337-357 (LLCFCFLGLIGGLLGAFFVFL), 378-398 (FEALFVSVVTSVVCYYASFIF), 462-482 (LLVFTLISLFFSIWSSGLWVA), 484-504 (GLFVPMMMVGAGFGRLFGQTI), 506-526 (MWFTNIDSSIYALVGSAAMMA), and 535-555 (IVVIMVELTEGTQYLVPIILA). CBS domains are found at residues 600-667 (MSKN…TGEE) and 710-757 (MNSS…NDLF).

This sequence belongs to the chloride channel (TC 2.A.49) family.

It is found in the membrane. Voltage-gated chloride channel. Chloride channels may have several functions including the regulation of cell volume, membrane potential stabilization and signal transduction. The sequence is that of Chloride channel protein C (clcC) from Dictyostelium discoideum (Social amoeba).